A 283-amino-acid chain; its full sequence is 1-deoxypentalenic acid 11-beta-hydroxylase (283 aa).

Arg-117 serves as a coordination point for substrate. Fe cation is bound by residues His-135 and Asp-137. Residues 135–137 (HQD) and Trp-151 contribute to the 2-oxoglutarate site. Position 186 (Arg-186) interacts with substrate. Residue His-224 coordinates Fe cation. 2-oxoglutarate is bound by residues Ser-226 and Arg-238. A disordered region spans residues 251-283 (HRGFNALTPWPESAKDASKGIMSKITGTPTTAE).

Belongs to the PhyH family. The cofactor is Fe cation. Requires L-ascorbate as cofactor.

It catalyses the reaction 1-deoxypentalenate + 2-oxoglutarate + O2 = 1-deoxy-11beta-hydroxypentalenate + succinate + CO2. It participates in antibiotic biosynthesis; pentalenolactone biosynthesis. Catalyzes the conversion of 1-deoxypentalenic acid to 11-beta-hydroxy-1-deoxypentalenic acid in the biosynthesis of pentalenolactone antibiotic. In Streptomyces arenae, this protein is 1-deoxypentalenic acid 11-beta-hydroxylase (pntH).